A 223-amino-acid chain; its full sequence is MTTNYAHYIDHTLLAMDATEAQIIKLCEEAKQHHFYAVCVNSGYVPVAAQQLAGSSVKVCSVIGFPLGAGLTAAKAFEAQAAINAGAQEIDMVINVGWLKSGKIADVKADIKAVRDNCAATPLKVILETCLLSDEQIVQVCEMCRELDVAFVKTSTGFSTGGAKEEHVKLMRATVGPVMGVKASGAVRDRATAETMIQAGATRIGTSSGVAIVSGQQAAASGY.

The Proton donor/acceptor role is filled by aspartate 91. Lysine 153 serves as the catalytic Schiff-base intermediate with acetaldehyde. Lysine 182 functions as the Proton donor/acceptor in the catalytic mechanism.

It belongs to the DeoC/FbaB aldolase family. DeoC type 1 subfamily.

The protein localises to the cytoplasm. The catalysed reaction is 2-deoxy-D-ribose 5-phosphate = D-glyceraldehyde 3-phosphate + acetaldehyde. It participates in carbohydrate degradation; 2-deoxy-D-ribose 1-phosphate degradation; D-glyceraldehyde 3-phosphate and acetaldehyde from 2-deoxy-alpha-D-ribose 1-phosphate: step 2/2. Catalyzes a reversible aldol reaction between acetaldehyde and D-glyceraldehyde 3-phosphate to generate 2-deoxy-D-ribose 5-phosphate. This Yersinia pestis protein is Deoxyribose-phosphate aldolase 1.